A 510-amino-acid chain; its full sequence is Major facilitator superfamily domain-containing protein 8 (510 aa).

Residues Met-1 to Arg-38 lie on the Cytoplasmic side of the membrane. Residues Leu-14–Leu-15 carry the Dileucine internalization motif motif. A helical membrane pass occupies residues Val-39–Trp-59. Residues Pro-60–Ser-72 are Extracellular-facing. The chain crosses the membrane as a helical span at residues Phe-73–Gly-93. The Cytoplasmic portion of the chain corresponds to Leu-94–Glu-103. Residues Pro-104 to Val-124 form a helical membrane-spanning segment. Over Pro-125–Tyr-132 the chain is Extracellular. The chain crosses the membrane as a helical span at residues Met-133–Ala-155. Over Gly-156–Ser-171 the chain is Cytoplasmic. The helical transmembrane segment at Ala-172 to Gly-192 threads the bilayer. Topologically, residues Glu-193 to Thr-209 are extracellular. Residues Ala-210–Phe-230 form a helical membrane-spanning segment. Residues Arg-231–Gln-264 are Cytoplasmic-facing. A helical membrane pass occupies residues Ile-265–Glu-285. Topologically, residues Thr-286–Gln-302 are extracellular. A helical membrane pass occupies residues Ala-303–Leu-323. Residues Thr-324–Arg-335 are Cytoplasmic-facing. The chain crosses the membrane as a helical span at residues Val-336–Gly-356. The Extracellular segment spans residues Asn-357–Pro-406. N-linked (GlcNAc...) asparagine glycans are attached at residues Asn-369 and Asn-374. A helical membrane pass occupies residues Val-407–Cys-427. At Asn-428–Gly-445 the chain is on the cytoplasmic side. The chain crosses the membrane as a helical span at residues Leu-446–Val-466. Topologically, residues Ser-467–Arg-476 are extracellular. A helical transmembrane segment spans residues Trp-477–Tyr-497. Residues Lys-498–Leu-510 are Cytoplasmic-facing.

This sequence belongs to the major facilitator superfamily.

Its subcellular location is the lysosome membrane. In terms of biological role, may be a carrier that transport small solutes by using chemiosmotic ion gradients. This chain is Major facilitator superfamily domain-containing protein 8 (mfsd8), found in Xenopus laevis (African clawed frog).